The primary structure comprises 377 residues: MSATLDLARELIRRDSVTPRDEGCQALMIERLEAIGFKVEKMRHGDVDNFWARRGDAGPLFCFAGHTDVVPTGPLDKWDSPPFEPTVRNGLLYGRGAADMKASLAAFVTACERFVAEHPDHKGSLALLITSDEEGVAVDGTVKVVDALEARGETIDYCIVGEPTSEQRLGDTVKNGRRGSLSGRLVVHGIQGHIAYPQLAKNPIHLMAPALAELAATRWDEGNAFFPPTSWQVSNIQAGTGATNVIPGHCELLFNFRFSPESTAESLKERVYQILDKHGLGYELHWQLSGQPFITPPGALTDALSAAIAEVSGAKAELSTTGGTSDGRFIKRIARELVEFGPINATIHKLNECVEVADVEPLAAIYRRTLEGLLAKA.

Position 66 (histidine 66) interacts with Zn(2+). Aspartate 68 is an active-site residue. Aspartate 99 provides a ligand contact to Zn(2+). Glutamate 133 acts as the Proton acceptor in catalysis. Zn(2+) is bound by residues glutamate 134, glutamate 162, and histidine 348.

This sequence belongs to the peptidase M20A family. DapE subfamily. Homodimer. Requires Zn(2+) as cofactor. Co(2+) is required as a cofactor.

It catalyses the reaction N-succinyl-(2S,6S)-2,6-diaminopimelate + H2O = (2S,6S)-2,6-diaminopimelate + succinate. It participates in amino-acid biosynthesis; L-lysine biosynthesis via DAP pathway; LL-2,6-diaminopimelate from (S)-tetrahydrodipicolinate (succinylase route): step 3/3. In terms of biological role, catalyzes the hydrolysis of N-succinyl-L,L-diaminopimelic acid (SDAP), forming succinate and LL-2,6-diaminopimelate (DAP), an intermediate involved in the bacterial biosynthesis of lysine and meso-diaminopimelic acid, an essential component of bacterial cell walls. The protein is Succinyl-diaminopimelate desuccinylase of Chromobacterium violaceum (strain ATCC 12472 / DSM 30191 / JCM 1249 / CCUG 213 / NBRC 12614 / NCIMB 9131 / NCTC 9757 / MK).